Consider the following 158-residue polypeptide: Transcription elongation factor GreA (158 aa).

This sequence belongs to the GreA/GreB family.

In terms of biological role, necessary for efficient RNA polymerase transcription elongation past template-encoded arresting sites. The arresting sites in DNA have the property of trapping a certain fraction of elongating RNA polymerases that pass through, resulting in locked ternary complexes. Cleavage of the nascent transcript by cleavage factors such as GreA or GreB allows the resumption of elongation from the new 3'terminus. GreA releases sequences of 2 to 3 nucleotides. In Methylobacterium sp. (strain 4-46), this protein is Transcription elongation factor GreA.